Reading from the N-terminus, the 1762-residue chain is ADAMTS-like protein 1 (1762 aa).

A signal peptide spans 1 to 28 (MECCRRATPGTLLLFLAFLLLSSRTARS). The region spanning 33 to 82 (DGLWDAWGPWSECSRTCGGGASYSLRRCLSSKSCEGRNIRYRTCSNVDCP) is the TSP type-1 1 domain. C-linked (Man) tryptophan glycosylation is found at W39 and W42. 3 disulfide bridges follow: C45-C76, C49-C81, and C60-C66. An O-linked (Fuc...) threonine glycan is attached at T48. Residue N251 is glycosylated (N-linked (GlcNAc...) asparagine). T312 carries O-linked (Fuc...) threonine glycosylation. 6 TSP type-1 domains span residues 376 to 424 (PLPR…MYTP), 436 to 493 (DCPK…TPCY), 522 to 584 (EEPS…GPCS), 607 to 665 (ELYD…NLDP), 666 to 729 (CPAR…FNCP), and 788 to 850 (CPSE…ATCA). O-linked (Fuc...) serine glycosylation occurs at S391. O-linked (Fuc...) threonine glycosylation occurs at T451. 3 cysteine pairs are disulfide-bonded: C534-C578, C538-C583, and C549-C567. 7 disulfides stabilise this stretch: C678/C723, C682/C728, C693/C712, C800/C844, C804/C849, C815/C832, and C899/C947. One can recognise an Ig-like C2-type 1 domain in the interval 861 to 963 (PHIAAARKVY…EHFVIKLIGG (103 aa)). The disordered stretch occupies residues 1120–1164 (LKPSERRTSPVTLSPHKHVSGFSSSLRTSSTGDAGGGSRRPHRKP). Over residues 1139 to 1151 (SGFSSSLRTSSTG) the composition is skewed to low complexity. 3 consecutive Ig-like C2-type domains span residues 1164-1266 (PTIL…IAVT), 1286-1369 (PAVT…TQLL), and 1395-1485 (PSVL…ASLV). 3 disulfide bridges follow: C1202–C1250, C1308–C1353, and C1418–C1469. 2 TSP type-1 domains span residues 1545–1608 (CPSR…QLCV) and 1666–1726 (CSVH…TPCE). Residues 1726 to 1762 (ENMECRDTTRYCEKVKQLKLCQLSQFKSRCCGTCGKA) enclose the PLAC domain.

Monomer. C-, N- and O-glycosylated. O-fucosylated by POFUT2 on a serine or a threonine residue found within the consensus sequence C1-X(2)-(S/T)-C2-G of the TSP type-1 repeat domains where C1 and C2 are the first and second cysteine residue of the repeat, respectively. Fucosylated repeats can then be further glycosylated by the addition of a beta-1,3-glucose residue by the glucosyltransferase, B3GALTL. Fucosylation mediates the efficient secretion of ADAMTSL1. Can also be C-glycosylated with one or two mannose molecules on tryptophan residues within the consensus sequence W-X-X-W of the TPRs, and N-glycosylated. These other glycosylations can also facilitate secretion. In terms of processing, disulfide bonds are present. In terms of tissue distribution, expressed primarily in adult skeletal muscle.

It localises to the secreted. The protein localises to the extracellular space. The protein resides in the extracellular matrix. This is ADAMTS-like protein 1 (ADAMTSL1) from Homo sapiens (Human).